Reading from the N-terminus, the 323-residue chain is 1-aminocyclopropane-1-carboxylate oxidase 4 (323 aa).

The residue at position 1 (Met1) is an N-acetylmethionine. Residues Pro153–Pro254 enclose the Fe2OG dioxygenase domain. Residues His177, Asp179, and His234 each coordinate Fe cation. Arg245 contributes to the 2-oxoglutarate binding site.

This sequence belongs to the iron/ascorbate-dependent oxidoreductase family. Fe cation is required as a cofactor. Expressed in vegetative tissues. Expressed constitutively at a low level in leaves and blades.

It carries out the reaction 1-aminocyclopropane-1-carboxylate + L-ascorbate + O2 = ethene + L-dehydroascorbate + hydrogen cyanide + CO2 + 2 H2O. It functions in the pathway alkene biosynthesis; ethylene biosynthesis via S-adenosyl-L-methionine; ethylene from S-adenosyl-L-methionine: step 2/2. Functionally, enzyme involved in the ethylene biosynthesis. May promote stem elongation by maximizing the extensibility cells, possibly by activating ethylene biosynthesis, in response to very-long-chain fatty acids (VLCFAs C20:0 to C30:0). This chain is 1-aminocyclopropane-1-carboxylate oxidase 4 (ACO4), found in Arabidopsis thaliana (Mouse-ear cress).